The primary structure comprises 485 residues: GTPase Obg (485 aa).

In terms of domain architecture, Obg spans 2 to 159 (SKFIDRVVLH…RDLVLELKSV (158 aa)). The interval 64-84 (PHAKAGNGKPGEGGNRDGKMG) is disordered. Residues 160-340 (ADVGLVGFPS…LTFALADLVR (181 aa)) enclose the OBG-type G domain. GTP contacts are provided by residues 166-173 (GFPSAGKS), 191-195 (FTTLV), 212-215 (DVPG), 292-295 (NKTD), and 321-323 (SAV). Positions 173 and 193 each coordinate Mg(2+). The region spanning 358–438 (PIAVDESGFT…IGDVTFDWEP (81 aa)) is the OCT domain. Positions 457 to 469 (LEQSDRVSAAERK) are enriched in basic and acidic residues. A disordered region spans residues 457 to 485 (LEQSDRVSAAERKHASRVRRGLVEDDEQR).

Belongs to the TRAFAC class OBG-HflX-like GTPase superfamily. OBG GTPase family. Monomer. The cofactor is Mg(2+).

The protein resides in the cytoplasm. Its function is as follows. An essential GTPase which binds GTP, GDP and possibly (p)ppGpp with moderate affinity, with high nucleotide exchange rates and a fairly low GTP hydrolysis rate. Plays a role in control of the cell cycle, stress response, ribosome biogenesis and in those bacteria that undergo differentiation, in morphogenesis control. The chain is GTPase Obg from Nocardia farcinica (strain IFM 10152).